The primary structure comprises 366 residues: Molybdopterin synthase catalytic subunit (366 aa).

Residues 101 to 102, lysine 117, and 124 to 126 each bind substrate; these read HR and KKE.

This sequence belongs to the MoaE family. MOCS2B subfamily. In terms of assembly, heterotetramer; composed of 2 small (Mocs2A) and 2 large (Mocs2B) subunits.

The protein localises to the cytoplasm. The catalysed reaction is 2 [molybdopterin-synthase sulfur-carrier protein]-C-terminal-Gly-aminoethanethioate + cyclic pyranopterin phosphate + H2O = molybdopterin + 2 [molybdopterin-synthase sulfur-carrier protein]-C-terminal Gly-Gly + 2 H(+). The protein operates within cofactor biosynthesis; molybdopterin biosynthesis. Its function is as follows. Catalytic subunit of the molybdopterin synthase complex, a complex that catalyzes the conversion of precursor Z into molybdopterin. Acts by mediating the incorporation of 2 sulfur atoms from thiocarboxylated Mocs2A into precursor Z to generate a dithiolene group. The polypeptide is Molybdopterin synthase catalytic subunit (Drosophila mojavensis (Fruit fly)).